A 244-amino-acid polypeptide reads, in one-letter code: CTD nuclear envelope phosphatase 1 (244 aa).

A helical transmembrane segment spans residues 7–29 (LLGLRGFVAFAAKLWSFVLYLLR). Residues 57–224 (SQVKRKVLVL…LNLLPMLDAL (168 aa)) form the FCP1 homology domain.

Belongs to the dullard family. As to quaternary structure, interacts with bmpr1a, bmpr1b and bmpr2.

The protein localises to the membrane. It is found in the cytoplasm. It localises to the perinuclear region. The catalysed reaction is O-phospho-L-seryl-[protein] + H2O = L-seryl-[protein] + phosphate. It catalyses the reaction O-phospho-L-threonyl-[protein] + H2O = L-threonyl-[protein] + phosphate. Serine/threonine protein phosphatase that may dephosphorylate and activate lipins. Lipins are phosphatidate phosphatases that catalyze the conversion of phosphatidic acid to diacylglycerol and control the metabolism of fatty acids at different levels. May indirectly modulate the lipid composition of nuclear and/or endoplasmic reticulum membranes and be required for proper nuclear membrane morphology and/or dynamics. May also indirectly regulate the production of lipid droplets and triacylglycerol. Induces neuronal differentiation by antagonizing BMP signaling. Acts both by dephosphorylating BMPR1A and by promoting BMPR2 proteasomal degradation. The protein is CTD nuclear envelope phosphatase 1 (ctdnep1) of Xenopus tropicalis (Western clawed frog).